A 321-amino-acid polypeptide reads, in one-letter code: Phospholipid phosphatase-related protein type 5 (321 aa).

Transmembrane regions (helical) follow at residues 6-26 (VALI…TVML), 62-82 (AVPP…VIIV), 122-142 (FLGI…AGQV), 196-213 (AALS…ITST), 225-245 (VLCL…VAEY), and 252-272 (VIAG…CVVN).

This sequence belongs to the PA-phosphatase related phosphoesterase family.

It is found in the cell membrane. Its function is as follows. Induces filopodia formation and promotes neurite growth in a CDC42-independent manner; impedes neurite growth inhibitory-mediated axonal retraction. In Mus musculus (Mouse), this protein is Phospholipid phosphatase-related protein type 5.